The chain runs to 995 residues: MYRRATSGVRSASARLSSSLSRIASSETASVSAPSASSLRNQTNRSKSFSSALRSFRVCSASTRWSHGGSWGSPASLRAQARNSTPVMEKFERKYATMASEHSYKDILTSLPKPGGGEYGKYYSLPALNDPRIDKLPFSVRILLESAIRNCDNYQVTKDDVEKILDWENTSTKQVEIAFKPARVILQDFTGVPVLVDLASMRDAVKNLGSDPSKINPLVPVDLVVDHSIQVDFARSEDAAQKNLELEFKRNKERFTFLKWGSTAFQNMLVVPPGSGIVHQVNLEYLGRVVFNSKGFLYPDSVVGTDSHTTMIDGLGVAGWGVGGIEAEAAMLGQPMSMVLPGVVGFKLDGKLKEGVTATDLVLTVTQILRKHGVVGKFVEFYGEGMSELSLADRATIANMSPEYGATMGFFPVDHVTLEYLKLTGRSDETVSMIESYLRANNMFVDYNEPQQERAYTSYLQLDLGHVEPCISGPKRPHDRVPLKDMKADWHACLDNPVGFKGFAVPKEKQEEVVKFSYNGQPAEIKHGSVVIAAITSCTNTSNPSVMIGAALVAKKASDLGLKVKPWVKTSLAPGSRVVEKYLDRSGLRESLTKQGFEIVGYGCTTCIGNSGNLDPEVASAIEGTDIIPAAVLSGNRNFEGRVHPQTRANYLASPPLVVAYALAGTVDIDFEKEPIGTRSDGKSVYLRDVWPSNEEVAQVVQYSVLPSMFKSSYETITEGNPLWNELSAPSSTLYSWDPNSTYIHEPPYFKNMTANPPGPREVKDAYCLLNFGDSVTTDHISPAGNIQKTSPAAKFLMDRGVISEDFNSYGSRRGNDEVMARGTFANIRIVNKLLKGEVGPNTVHIPTGEKLSVFDAASKYKTAEQDTIILAGAEYGSGSSRDWAAKGPLLLGVKAVIAKSFERIHRSNLAGMGIIPLCFKAGEDAETLGLTGHERYTVHLPTKVSDIRPGQDVTVTTDSGKSFVCTLRFDTEVELAYYDHGGILPYVIRSLSAK.

The transit peptide at 1 to 83 (MYRRATSGVR…PASLRAQARN (83 aa)) directs the protein to the mitochondrion. Substrate is bound by residues Gln187 and 306–308 (DSH). Cys538, Cys604, and Cys607 together coordinate [4Fe-4S] cluster. Substrate contacts are provided by residues Arg637, Arg642, Arg800, and 881 to 882 (SR).

This sequence belongs to the aconitase/IPM isomerase family. As to quaternary structure, monomer. The cofactor is [4Fe-4S] cluster. Mostly expressed in roots, leaves and flowers, also present in stems, and, at low levels, in seeds.

The protein resides in the mitochondrion. The enzyme catalyses citrate = D-threo-isocitrate. It participates in carbohydrate metabolism; tricarboxylic acid cycle; isocitrate from oxaloacetate: step 2/2. Its function is as follows. Catalyzes the isomerization of citrate to isocitrate via cis-aconitate. Contributes to oxidative stress tolerance. Involved in acetate assimilation. This is Aconitate hydratase 2, mitochondrial from Arabidopsis thaliana (Mouse-ear cress).